Consider the following 729-residue polypeptide: Fatty acid oxidation complex subunit alpha (729 aa).

Residues 1–189 (MLYKGDTLYL…KIGLVDGVVA (189 aa)) form an enoyl-CoA hydratase/isomerase region. Asp296 is a substrate binding site. The interval 311–729 (ETPKHAAVLG…ARPVGALKTA (419 aa)) is 3-hydroxyacyl-CoA dehydrogenase. NAD(+) is bound by residues Met324, Asp343, 400–402 (VVE), Lys407, and Ser429. His450 serves as the catalytic For 3-hydroxyacyl-CoA dehydrogenase activity. Asn453 is a binding site for NAD(+). Substrate-binding residues include Asn500 and Tyr660.

In the N-terminal section; belongs to the enoyl-CoA hydratase/isomerase family. It in the C-terminal section; belongs to the 3-hydroxyacyl-CoA dehydrogenase family. In terms of assembly, heterotetramer of two alpha chains (FadB) and two beta chains (FadA).

The enzyme catalyses a (3S)-3-hydroxyacyl-CoA + NAD(+) = a 3-oxoacyl-CoA + NADH + H(+). It catalyses the reaction a (3S)-3-hydroxyacyl-CoA = a (2E)-enoyl-CoA + H2O. The catalysed reaction is a 4-saturated-(3S)-3-hydroxyacyl-CoA = a (3E)-enoyl-CoA + H2O. It carries out the reaction (3S)-3-hydroxybutanoyl-CoA = (3R)-3-hydroxybutanoyl-CoA. The enzyme catalyses a (3Z)-enoyl-CoA = a 4-saturated (2E)-enoyl-CoA. It catalyses the reaction a (3E)-enoyl-CoA = a 4-saturated (2E)-enoyl-CoA. It participates in lipid metabolism; fatty acid beta-oxidation. Functionally, involved in the aerobic and anaerobic degradation of long-chain fatty acids via beta-oxidation cycle. Catalyzes the formation of 3-oxoacyl-CoA from enoyl-CoA via L-3-hydroxyacyl-CoA. It can also use D-3-hydroxyacyl-CoA and cis-3-enoyl-CoA as substrate. The sequence is that of Fatty acid oxidation complex subunit alpha from Klebsiella pneumoniae subsp. pneumoniae (strain ATCC 700721 / MGH 78578).